The chain runs to 220 residues: Ribosomal RNA large subunit methyltransferase E (220 aa).

5 residues coordinate S-adenosyl-L-methionine: Gly-60, Trp-62, Asp-92, Asp-108, and Asp-133. Lys-173 acts as the Proton acceptor in catalysis. A disordered region spans residues 195 to 220; sequence APRKPKASRDKSSETFILGRHLKRPR.

This sequence belongs to the class I-like SAM-binding methyltransferase superfamily. RNA methyltransferase RlmE family.

Its subcellular location is the cytoplasm. It catalyses the reaction uridine(2552) in 23S rRNA + S-adenosyl-L-methionine = 2'-O-methyluridine(2552) in 23S rRNA + S-adenosyl-L-homocysteine + H(+). Functionally, specifically methylates the uridine in position 2552 of 23S rRNA at the 2'-O position of the ribose in the fully assembled 50S ribosomal subunit. This Burkholderia lata (strain ATCC 17760 / DSM 23089 / LMG 22485 / NCIMB 9086 / R18194 / 383) protein is Ribosomal RNA large subunit methyltransferase E.